The chain runs to 436 residues: Cyclic GMP-AMP synthase (436 aa).

112-117 (QGSFQY) lines the GTP pocket. Mg(2+) contacts are provided by D131 and D133. R182 is a binding site for ATP. Position 193 (D193) interacts with Mg(2+). S259 contacts ATP. GTP is bound by residues K287, S301, and D348. Disordered regions lie at residues 339–358 (RGVE…PSYK) and 417–436 (AQEP…MVSG). Over residues 419–436 (EPSSASKPEKISSTMVSG) the composition is skewed to polar residues. G436 is covalently cross-linked (Glycyl lysine isopeptide (Gly-Lys) (interchain with K-? in acceptor proteins)).

Belongs to the CD-NTase family. A01 subfamily. In terms of assembly, monomer. Interacts with Cap2 in the presence and absence of phage T2. A Cap2 dimer is bound on either side by a DncV monomer. It depends on Mg(2+) as a cofactor. In terms of processing, in bacteria expressing capV-cdnD-cap2, this protein is conjugated to a number of other proteins (by Cap2 via this protein's C-terminal Gly residue), many of which are involved in metabolism. More conjugated protein is found in the absence of Cap3.

The enzyme catalyses GTP + ATP = 3',3'-cGAMP + 2 diphosphate. With respect to regulation, primed for activation by Cap2 which conjugates it to cellular proteins; priming is target protein-specific (green fluorescent protein does not activate the enzyme), but which protein(s) activate is unclear. Enzymatic activity of DncV is inhibited by folate-like molecules, such as 5-methyltetrahydrofolate di-glutamate and 5-methyltetrahydrofolate, suggesting the existence of a signaling pathway that links folate-like metabolism cofactors to the regulation of cyclic dinucleotide second messenger synthesis. Lacks a regulatory loop and is constitutively activated. Its function is as follows. Cyclic nucleotide synthase (second messenger synthase) of a CBASS antivirus system. CBASS (cyclic oligonucleotide-based antiphage signaling system) provides immunity against bacteriophages. The CD-NTase protein (DncV, this protein) synthesizes cyclic nucleotides in response to infection; these serve as specific second messenger signals. The signals activate a diverse range of effectors, leading to bacterial cell death and thus abortive phage infection. A type II-A(GA) CBASS system. Catalyzes the synthesis of 3',3'-cyclic GMP-AMP (cGAMP), a second messenger in cell signal transduction, from GTP and ATP in response to phage infection. Also able to produce c-di-AMP and c-di-GMP from ATP and GTP, respectively; however, cGAMP is the dominant molecule produced by DncV in vivo, contrary to the 2'3'-cGAMP produced by eukaryotes. Is required for efficient V.cholerae intestinal colonization, and down-regulates the colonization-influencing process of chemotaxis. Is not active with dATP, TTP, UTP or CTP. Its product controls the activity of cGAMP-activated phospholipase CapV, a patatin-like lipase that is a direct cGAMP receptor encoded in the dncV operon. In terms of biological role, protects E.coli against phage infection. When the CBASS operon (capV-dncV-cap2-cap3) is introduced in E.coli MG1655 there is about 100-fold protection against phages P1 and T2. When the operon is introduced in E.coli MG1655 there is a more than 10(3) decrease in the efficiency of T2 plaque formation. Protects 100-fold against phage T5, offers no protection against T7. When the operon is introduced in E.coli MG1655 it protects against phages T2, T4, T5 and T6. Another paper shows the operon confers protection against phages P1, T2, T5 and T6 but not T4 or lambda. This chain is Cyclic GMP-AMP synthase, found in Vibrio cholerae serotype O1 (strain ATCC 39315 / El Tor Inaba N16961).